The sequence spans 540 residues: Probable H/ACA ribonucleoprotein complex subunit 4 (540 aa).

Residues 1–24 (MTTDKKSKSKSSEKSTQEVEQVIK) form a disordered region. The active-site Nucleophile is Asp-109. The region spanning 280–355 (YKRIVVKDSA…VVATIKRVIM (76 aa)) is the PUA domain. The tract at residues 414–540 (SPVESMNVDT…DKKEKKKSKN (127 aa)) is disordered. A coiled-coil region spans residues 448–494 (KKEKKDKKEKKKDSSDDESEEEKSSKKDKKEKKEKKEKKEKKSSKDD). Residues 473–489 (KKDKKEKKEKKEKKEKK) are compositionally biased toward basic residues. Basic and acidic residues-rich tracts occupy residues 490–503 (SSKD…SKKE) and 513–528 (SDKD…DKKD). The segment covering 529–540 (KKDKKEKKKSKN) has biased composition (basic residues).

This sequence belongs to the pseudouridine synthase TruB family. Component of the small nucleolar ribonucleoprotein particles containing H/ACA-type snoRNAs (H/ACA snoRNPs).

The protein resides in the nucleus. It is found in the nucleolus. The catalysed reaction is a uridine in RNA = a pseudouridine in RNA. Its function is as follows. Plays a central role in ribosomal RNA processing. Probable catalytic subunit of H/ACA small nucleolar ribonucleoprotein (H/ACA snoRNP) complex, which catalyzes pseudouridylation of rRNA. This involves the isomerization of uridine such that the ribose is subsequently attached to C5, instead of the normal N1. Pseudouridine ('psi') residues may serve to stabilize the conformation of rRNAs. This is Probable H/ACA ribonucleoprotein complex subunit 4 (nola4) from Dictyostelium discoideum (Social amoeba).